A 341-amino-acid polypeptide reads, in one-letter code: Hypophosphite import ATP-binding protein HtxD (341 aa).

An ABC transporter domain is found at 6–249; the sequence is LQLKNVGKSY…RVHALYQVPA (244 aa). Position 38–45 (38–45) interacts with ATP; it reads GTSGAGKS. Residues 278–341 form a disordered region; it reads IHTPHTRAAP…TGRGQDRGPG (64 aa). Basic and acidic residues-rich tracts occupy residues 307–320 and 327–341; these read ADRR…DRTT and GGHD…RGPG.

Belongs to the ABC transporter superfamily. Phosphonates importer (TC 3.A.1.9.1) family. In terms of assembly, the complex is composed of two ATP-binding proteins (HtxD), two transmembrane proteins (HtxC and HtxE) and a solute-binding protein (HtxB).

It localises to the cell inner membrane. It catalyses the reaction phosphinate(out) + ATP + H2O = phosphinate(in) + ADP + phosphate + H(+). Functionally, part of the ABC transporter complex HtxBCDE involved in hypophosphite import. Responsible for energy coupling to the transport system. In Stutzerimonas stutzeri (Pseudomonas stutzeri), this protein is Hypophosphite import ATP-binding protein HtxD (htxD).